We begin with the raw amino-acid sequence, 159 residues long: SsrA-binding protein (159 aa).

The segment at 131–159 (KGKKLHDKRESEKERDWNRQKSRLLKDNG) is disordered. Residues 137-159 (DKRESEKERDWNRQKSRLLKDNG) show a composition bias toward basic and acidic residues.

Belongs to the SmpB family.

The protein resides in the cytoplasm. Functionally, required for rescue of stalled ribosomes mediated by trans-translation. Binds to transfer-messenger RNA (tmRNA), required for stable association of tmRNA with ribosomes. tmRNA and SmpB together mimic tRNA shape, replacing the anticodon stem-loop with SmpB. tmRNA is encoded by the ssrA gene; the 2 termini fold to resemble tRNA(Ala) and it encodes a 'tag peptide', a short internal open reading frame. During trans-translation Ala-aminoacylated tmRNA acts like a tRNA, entering the A-site of stalled ribosomes, displacing the stalled mRNA. The ribosome then switches to translate the ORF on the tmRNA; the nascent peptide is terminated with the 'tag peptide' encoded by the tmRNA and targeted for degradation. The ribosome is freed to recommence translation, which seems to be the essential function of trans-translation. The protein is SsrA-binding protein of Rhizobium etli (strain CIAT 652).